The sequence spans 1299 residues: DNA-directed RNA polymerase subunit beta' (1299 aa).

The Zn(2+) site is built by Cys60, Cys62, Cys75, and Cys78. The interval 188-209 is disordered; the sequence is GAKSDQKRRAKDGAEKEMGQTR. The Mg(2+) site is built by Asp535, Asp537, and Asp539. 4 residues coordinate Zn(2+): Cys882, Cys959, Cys966, and Cys969.

Belongs to the RNA polymerase beta' chain family. As to quaternary structure, the RNAP catalytic core consists of 2 alpha, 1 beta, 1 beta' and 1 omega subunit. When a sigma factor is associated with the core the holoenzyme is formed, which can initiate transcription. Mg(2+) serves as cofactor. Zn(2+) is required as a cofactor.

It catalyses the reaction RNA(n) + a ribonucleoside 5'-triphosphate = RNA(n+1) + diphosphate. Functionally, DNA-dependent RNA polymerase catalyzes the transcription of DNA into RNA using the four ribonucleoside triphosphates as substrates. This chain is DNA-directed RNA polymerase subunit beta', found in Clavibacter sepedonicus (Clavibacter michiganensis subsp. sepedonicus).